The primary structure comprises 343 residues: Lipopolysaccharide core biosynthesis glycosyltransferase LpsD (343 aa).

Belongs to the glycosyltransferase group 1 family. Glycosyltransferase 4 subfamily.

Its pathway is bacterial outer membrane biogenesis; LPS core biosynthesis. This chain is Lipopolysaccharide core biosynthesis glycosyltransferase LpsD (lpsD), found in Rhizobium meliloti (strain 1021) (Ensifer meliloti).